An 820-amino-acid chain; its full sequence is DNA mismatch repair protein MutS (820 aa).

ATP is bound at residue 618–625 (GPNMAGKS).

The protein belongs to the DNA mismatch repair MutS family.

Functionally, this protein is involved in the repair of mismatches in DNA. It is possible that it carries out the mismatch recognition step. This protein has a weak ATPase activity. This is DNA mismatch repair protein MutS from Chlamydia trachomatis serovar L2b (strain UCH-1/proctitis).